Consider the following 460-residue polypeptide: Bifunctional protein GlmU (460 aa).

The tract at residues 1–232 (MALNVVILAA…AIEVEGANNR (232 aa)) is pyrophosphorylase. UDP-N-acetyl-alpha-D-glucosamine-binding positions include 8 to 11 (LAAG), lysine 22, glutamine 73, 78 to 79 (GT), 100 to 102 (YGD), glycine 137, glutamate 157, asparagine 172, and asparagine 230. Aspartate 102 provides a ligand contact to Mg(2+). Asparagine 230 contributes to the Mg(2+) binding site. A linker region spans residues 233 to 253 (VQLAQLERAYQAREAEKLMLA). The segment at 254 to 460 (GANLRDPSRI…GWQRPVKIKK (207 aa)) is N-acetyltransferase. UDP-N-acetyl-alpha-D-glucosamine-binding residues include arginine 336 and lysine 354. Catalysis depends on histidine 366, which acts as the Proton acceptor. UDP-N-acetyl-alpha-D-glucosamine is bound by residues tyrosine 369 and asparagine 380. Acetyl-CoA is bound by residues alanine 383, 389–390 (NY), serine 408, alanine 426, and arginine 443.

This sequence in the N-terminal section; belongs to the N-acetylglucosamine-1-phosphate uridyltransferase family. It in the C-terminal section; belongs to the transferase hexapeptide repeat family. In terms of assembly, homotrimer. The cofactor is Mg(2+).

Its subcellular location is the cytoplasm. It catalyses the reaction alpha-D-glucosamine 1-phosphate + acetyl-CoA = N-acetyl-alpha-D-glucosamine 1-phosphate + CoA + H(+). It carries out the reaction N-acetyl-alpha-D-glucosamine 1-phosphate + UTP + H(+) = UDP-N-acetyl-alpha-D-glucosamine + diphosphate. It participates in nucleotide-sugar biosynthesis; UDP-N-acetyl-alpha-D-glucosamine biosynthesis; N-acetyl-alpha-D-glucosamine 1-phosphate from alpha-D-glucosamine 6-phosphate (route II): step 2/2. It functions in the pathway nucleotide-sugar biosynthesis; UDP-N-acetyl-alpha-D-glucosamine biosynthesis; UDP-N-acetyl-alpha-D-glucosamine from N-acetyl-alpha-D-glucosamine 1-phosphate: step 1/1. Its pathway is bacterial outer membrane biogenesis; LPS lipid A biosynthesis. Catalyzes the last two sequential reactions in the de novo biosynthetic pathway for UDP-N-acetylglucosamine (UDP-GlcNAc). The C-terminal domain catalyzes the transfer of acetyl group from acetyl coenzyme A to glucosamine-1-phosphate (GlcN-1-P) to produce N-acetylglucosamine-1-phosphate (GlcNAc-1-P), which is converted into UDP-GlcNAc by the transfer of uridine 5-monophosphate (from uridine 5-triphosphate), a reaction catalyzed by the N-terminal domain. This Shewanella baltica (strain OS195) protein is Bifunctional protein GlmU.